The sequence spans 253 residues: Trypsin delta (253 aa).

The first 22 residues, 1–22 (MLKFVILLSAVACALGGTVPEG), serve as a signal peptide directing secretion. A propeptide spans 23–30 (LLPQLDGR) (activation peptide). The region spanning 31-253 (IVGGSATTIS…ALRSWVISNA (223 aa)) is the Peptidase S1 domain. Cysteines 56 and 72 form a disulfide. Catalysis depends on charge relay system residues His-71 and Asp-116. 2 disulfide bridges follow: Cys-180–Cys-197 and Cys-206–Cys-230. Ser-210 (charge relay system) is an active-site residue.

Belongs to the peptidase S1 family.

The protein localises to the secreted. Its subcellular location is the extracellular space. The catalysed reaction is Preferential cleavage: Arg-|-Xaa, Lys-|-Xaa.. This is Trypsin delta from Drosophila melanogaster (Fruit fly).